We begin with the raw amino-acid sequence, 268 residues long: MTHAFEVYPKVNIFLKILYKEGAYHKLISRMCLVKGQLKDIISVKNAPSFCLKGNFDCPLEENSLFKALQILKNFLKSKKLSHSVIKSLDTLAIEVEKNIPTQAGLGGGSTDAGGLLYHLNQIFDLRLNLEELYTIGSLVGADTNFFISQYKSANATSYGEVIENFEEKPLENRLEIYVPDNIFCSTKAVYQAYKPKTCFYQAKEWLKKPSLECLKTCDRSELNDLLKPALLTHQALKDIESQLGKEWFFSGSGSAFFRLKPTQKGSE.

K10 is an active-site residue. Residue 101-111 coordinates ATP; sequence PTQAGLGGGST. D143 is an active-site residue.

This sequence belongs to the GHMP kinase family. IspE subfamily.

It catalyses the reaction 4-CDP-2-C-methyl-D-erythritol + ATP = 4-CDP-2-C-methyl-D-erythritol 2-phosphate + ADP + H(+). It functions in the pathway isoprenoid biosynthesis; isopentenyl diphosphate biosynthesis via DXP pathway; isopentenyl diphosphate from 1-deoxy-D-xylulose 5-phosphate: step 3/6. Catalyzes the phosphorylation of the position 2 hydroxy group of 4-diphosphocytidyl-2C-methyl-D-erythritol. The protein is 4-diphosphocytidyl-2-C-methyl-D-erythritol kinase of Helicobacter acinonychis (strain Sheeba).